We begin with the raw amino-acid sequence, 160 residues long: SsrA-binding protein (160 aa).

Residues 131–160 (KKEYDKRHTERERDSDRELQRAVRTKGKDD) form a disordered region.

The protein belongs to the SmpB family.

It localises to the cytoplasm. Its function is as follows. Required for rescue of stalled ribosomes mediated by trans-translation. Binds to transfer-messenger RNA (tmRNA), required for stable association of tmRNA with ribosomes. tmRNA and SmpB together mimic tRNA shape, replacing the anticodon stem-loop with SmpB. tmRNA is encoded by the ssrA gene; the 2 termini fold to resemble tRNA(Ala) and it encodes a 'tag peptide', a short internal open reading frame. During trans-translation Ala-aminoacylated tmRNA acts like a tRNA, entering the A-site of stalled ribosomes, displacing the stalled mRNA. The ribosome then switches to translate the ORF on the tmRNA; the nascent peptide is terminated with the 'tag peptide' encoded by the tmRNA and targeted for degradation. The ribosome is freed to recommence translation, which seems to be the essential function of trans-translation. This chain is SsrA-binding protein, found in Pseudomonas syringae pv. tomato (strain ATCC BAA-871 / DC3000).